A 172-amino-acid polypeptide reads, in one-letter code: 3-hydroxydecanoyl-[acyl-carrier-protein] dehydratase (172 aa).

His70 is an active-site residue.

This sequence belongs to the thioester dehydratase family. FabA subfamily. In terms of assembly, homodimer.

It localises to the cytoplasm. The catalysed reaction is a (3R)-hydroxyacyl-[ACP] = a (2E)-enoyl-[ACP] + H2O. It catalyses the reaction (3R)-hydroxydecanoyl-[ACP] = (2E)-decenoyl-[ACP] + H2O. The enzyme catalyses (2E)-decenoyl-[ACP] = (3Z)-decenoyl-[ACP]. Its pathway is lipid metabolism; fatty acid biosynthesis. Its function is as follows. Necessary for the introduction of cis unsaturation into fatty acids. Catalyzes the dehydration of (3R)-3-hydroxydecanoyl-ACP to E-(2)-decenoyl-ACP and then its isomerization to Z-(3)-decenoyl-ACP. Can catalyze the dehydratase reaction for beta-hydroxyacyl-ACPs with saturated chain lengths up to 16:0, being most active on intermediate chain length. This Xylella fastidiosa (strain M12) protein is 3-hydroxydecanoyl-[acyl-carrier-protein] dehydratase.